Consider the following 226-residue polypeptide: CRISPR-associated protein Cas5 (226 aa).

This sequence belongs to the CRISPR-associated protein Cas5 family. Subtype I-A/Apern subfamily. As to quaternary structure, can form a Cascade complex with Csa5, Cas7, Cas3, Cas3' and Cas8a2.

Functionally, CRISPR (clustered regularly interspaced short palindromic repeat) is an adaptive immune system that provides protection against mobile genetic elements (viruses, transposable elements and conjugative plasmids). CRISPR clusters contain spacers, sequences complementary to antecedent mobile elements, and target invading nucleic acids. CRISPR clusters are transcribed and processed into CRISPR RNA (crRNA). The polypeptide is CRISPR-associated protein Cas5 (cas5a) (Thermoproteus tenax (strain ATCC 35583 / DSM 2078 / JCM 9277 / NBRC 100435 / Kra 1)).